The primary structure comprises 1133 residues: SH3 and PX domain-containing protein 2A (1133 aa).

The region spanning 4-128 (YCVQDATVVD…RFFEARPEDV (125 aa)) is the PX domain. Residues 166–225 (MILEQYVVVSNYKKQENSELSLQAGEVVDVIEKNESGWWFVSTSEEQGWVPATYLEAQNG) form the SH3 1 domain. Residue T256 is modified to Phosphothreonine. An SH3 2 domain is found at 266-325 (SREEKYVTVQPYTSQSKDEIGFEKGVTVEVIRKNLEGWWYIRYLGKEGWAPASYLKKAKD). S406 and S421 each carry phosphoserine. Disordered regions lie at residues 415–446 (QRAQISSPNLRTRPPPRRESSLGFQLPKPPEP), 505–840 (RKKP…EWEG), 899–924 (NEQPDPSGKELDTVPAKGRQNEGKSD), and 941–964 (QSKKATPPIPSKPPGGFGKTSGTP). One can recognise an SH3 3 domain in the interval 448–507 (SVEVEYYTIAEFQSCISDGISFRGGQKAEVIDKNSGGWWYVQIGEKEGWAPASYIDKRKK). Basic and acidic residues predominate over residues 546 to 555 (DSPRKLKYEE). Phosphoserine is present on residues S547 and S567. Residues 567-576 (SEPELSEEPV) show a composition bias toward acidic residues. A compositionally biased stretch (basic and acidic residues) spans 577 to 586 (EDRASGERRP). S593 bears the Phosphoserine mark. Residues 608 to 620 (SSEDVALEEETIY) show a composition bias toward acidic residues. 3 stretches are compositionally biased toward low complexity: residues 634 to 652 (SARGSSGDSDSPGSSSLSL), 658 to 670 (PKSGSPKSSSLLK), and 686 to 715 (SSASFSSSITINTTCCSSSSSSSSSLSKTS). S644 bears the Phosphoserine mark. At T731 the chain carries Phosphothreonine. Phosphoserine is present on residues S767, S769, and S819. The residue at position 829 (T829) is a Phosphothreonine. The 60-residue stretch at 840–899 (GPATSYMTCSAYQKVQDSEISFPAGVEVQVLEKQESGWWYVRFGELEGWAPSHYLVLDEN) folds into the SH3 4 domain. The stretch at 917–946 (RQNEGKSDSLEKIERRVQALNTVNQSKKAT) forms a coiled coil. Residues S1002, S1016, S1017, and S1038 each carry the phosphoserine modification. The tract at residues 1029–1059 (KGRLAERAASQGSDSPLLPAQRNSIPVSPVR) is disordered. The SH3 5 domain occupies 1072–1133 (NLKDVYVSIA…VPSNYLEKKN (62 aa)).

It belongs to the SH3PXD2 family. In terms of assembly, interacts (via N-terminus) with CYBA. Interacts with ADAM12, ADAM15 and ADAM19. Interacts with NOXO1. Interacts (via SH3 domains) with NOXA1. Interacts with FASLG. Interacts (via PX domain) with RAB40B (GTP-bound); interaction promotes invadopodia-mediated extracellular matrix degradation. Post-translationally, tyrosine phosphorylated by SRC. Phosphorylation plays a regulatory role in the protein localization. The intramolecular interaction of the PX domain with the third SH3 domain maintains the protein in the cytoplasm and phosphorylation disrupts this interaction, resulting in the redistribution of the protein from cytoplasm to the perimembrane region. Phosphorylated on serine upon DNA damage, probably by ATM or ATR. Found in several cancer cell lines, particularly invasive breast carcinomas and melanomas.

Its subcellular location is the cytoplasm. The protein resides in the cell projection. It is found in the podosome. In terms of biological role, adapter protein involved in invadopodia and podosome formation, extracellular matrix degradation and invasiveness of some cancer cells. Binds matrix metalloproteinases (ADAMs), NADPH oxidases (NOXs) and phosphoinositides. Acts as an organizer protein that allows NOX1- or NOX3-dependent reactive oxygen species (ROS) generation and ROS localization. In association with ADAM12, mediates the neurotoxic effect of amyloid-beta peptide. The polypeptide is SH3 and PX domain-containing protein 2A (Homo sapiens (Human)).